Reading from the N-terminus, the 333-residue chain is Probable G-protein coupled receptor 174 (333 aa).

Residues 1-27 (MPANYTCTRPDGDNTDFRYFIYAVTYT) lie on the Extracellular side of the membrane. Asparagine 4 is a glycosylation site (N-linked (GlcNAc...) asparagine). A helical transmembrane segment spans residues 28 to 48 (VILVPGLIGNILALWVFYGYM). Residues 49–53 (KETKR) lie on the Cytoplasmic side of the membrane. A helical membrane pass occupies residues 54–74 (AVIFMINLAIADLLQVLSLPL). At 75–91 (RIFYYLNHDWPFGPGLC) the chain is on the extracellular side. Cysteine 91 and cysteine 168 form a disulfide bridge. Residues 92–112 (MFCFYLKYVNMYASIYFLVCI) traverse the membrane as a helical segment. At 113–134 (SVRRFWFLMYPFRFHDCKQKYD) the chain is on the cytoplasmic side. Residues 135-155 (LYISIAGWLIICLACVLFPLL) traverse the membrane as a helical segment. The Extracellular segment spans residues 156–182 (RTSDDTSGNRTKCFVDLPTRNVNLAQS). Asparagine 164 is a glycosylation site (N-linked (GlcNAc...) asparagine). A helical membrane pass occupies residues 183 to 203 (VVMMTIGELIGFVTPLLIVLY). Residues 204 to 231 (CTWKTVLSLQDKYPMAQDLGEKQKALKM) are Cytoplasmic-facing. A helical membrane pass occupies residues 232 to 252 (ILTCAGVFLICFAPYHFSFPL). Residues 253-269 (DFLVKSNEIKSCLARRV) lie on the Extracellular side of the membrane. A helical transmembrane segment spans residues 270-290 (ILIFHSVALCLASLNSCLDPV). Topologically, residues 291-333 (IYYFSTNEFRRRLSRQDLHDSIQLHAKSFVSNHTASTMTPELC) are cytoplasmic.

The protein belongs to the G-protein coupled receptor 1 family. As to quaternary structure, interacts with GNA13. Interacts with CCL21.

It localises to the cell membrane. Functionally, G-protein-coupled receptor of lysophosphatidylserine (LysoPS) that plays different roles in immune response. Plays a negative role in regulatory T-cell accumulation and homeostasis. Under inflammatory conditions where LysoPS production increases, contributes to the down-regulation of regulatory T-cell activity to favor effector response. Mediates the suppression of IL-2 production in activated T-lymphocytes leading to inhibition of growth, proliferation and differentiation of T-cells. Mechanistically, acts via G(s)-containing heterotrimeric G proteins to trigger elevated cyclic AMP levels and protein kinase A/PKA activity, which may in turn act to antagonize proximal TCR signaling. Plays an important role in the initial period of sepsis through the regulation of macrophage polarization and pro- and anti-inflammatory cytokine secretions. Upon testosterone treatment, acts as a receptor for CCL21 and subsequently triggers through G(q)-alpha and G(12)/G(13) proteins a calcium flux leading to chemotactic effects on activated B-cells. Signals via GNA13 and PKA to promote CD86 up-regulation by follicular B-cells. The sequence is that of Probable G-protein coupled receptor 174 (GPR174) from Homo sapiens (Human).